The sequence spans 662 residues: MAQVQAPSSHSPPPPAVVNDGAATASATPGIGVGGGGDGVTHGALCSLYVGDLDFNVTDSQLYDYFTEVCQVVSVRVCRDAATNTSLGYGYVNYSNTDDAEKAMQKLNYSYLNGKMIRITYSSRDSSARRSGVGNLFVKNLDKSVDNKTLHEAFSGCGTIVSCKVATDHMGQSRGYGFVQFDTEDSAKNAIEKLNGKVLNDKQIFVGPFLRKEERESAADKMKFTNVYVKNLSEATTDDELKTTFGQYGSISSAVVMRDGDGKSRCFGFVNFENPEDAARAVEALNGKKFDDKEWYVGKAQKKSERELELSRRYEQGSSDGGNKFDGLNLYVKNLDDTVTDEKLRELFAEFGTITSCKVMRDPSGTSKGSGFVAFSAASEASRVLNEMNGKMVGGKPLYVALAQRKEERRAKLQAQFSQMRPAFIPGVGPRMPIFTGGAPGLGQQIFYGQGPPPIIPHQPGFGYQPQLVPGMRPAFFGGPMMQPGQQGPRPGGRRSGDGPMRHQHQQPMPYMQPQMMPRGRGYRYPSGGRNMPDGPMPGGMVPVAYDMNVMPYSQPMSAGQLATSLANATPAQQRTLLGESLYPLVDQIESEHAAKVTGMLLEMDQTEVLHLLESPEALNAKVSEALDVLRNVNQPSSQGSEGNKSGSPSDLLASLSINDHL.

Residues 1 to 23 are disordered; it reads MAQVQAPSSHSPPPPAVVNDGAA. 4 consecutive RRM domains span residues 46–124, 134–211, 225–302, and 328–405; these read CSLY…YSSR, GNLF…PFLR, TNVY…KAQK, and LNLY…LAQR. Composition is skewed to low complexity over residues 480–489 and 506–518; these read PMMQPGQQGP and QQPMPYMQPQMMP. Disordered stretches follow at residues 480–518 and 634–662; these read PMMQPGQQGPRPGGRRSGDGPMRHQHQQPMPYMQPQMMP and NQPSSQGSEGNKSGSPSDLLASLSINDHL. A PABC domain is found at 558–635; it reads SAGQLATSLA…ALDVLRNVNQ (78 aa). Residues 634–649 show a composition bias toward polar residues; sequence NQPSSQGSEGNKSGSP.

The protein belongs to the polyadenylate-binding protein type-1 family. Interacts with ERD15/CID1. Interacts with Turnip mosaic virus (TuMV) VPg-Pro.

The protein localises to the cytoplasm. The protein resides in the nucleus. Functionally, binds the poly(A) tail of mRNA. Appears to be an important mediator of the multiple roles of the poly(A) tail in mRNA biogenesis, stability and translation. During infection with potyvirus TuMV, acts as a potential integral component of the viral replicase complex that could play an important role in the regulation of potyviral RNA-dependent RNA polymerase (RdRp). The protein is Polyadenylate-binding protein 4 (PAB4) of Arabidopsis thaliana (Mouse-ear cress).